Reading from the N-terminus, the 217-residue chain is N-(5'-phosphoribosyl)anthranilate isomerase (217 aa).

It belongs to the TrpF family.

The enzyme catalyses N-(5-phospho-beta-D-ribosyl)anthranilate = 1-(2-carboxyphenylamino)-1-deoxy-D-ribulose 5-phosphate. The protein operates within amino-acid biosynthesis; L-tryptophan biosynthesis; L-tryptophan from chorismate: step 3/5. The polypeptide is N-(5'-phosphoribosyl)anthranilate isomerase (Chlorobium chlorochromatii (strain CaD3)).